Reading from the N-terminus, the 490-residue chain is Bifunctional protein HldE (490 aa).

A ribokinase region spans residues 1–330 (MNNFDTLLQS…RKILPHASLA (330 aa)). 205-208 (NRKE) is an ATP binding site. The active site involves Asp275. Residues 358-490 (FTNGCFDILH…LVEKAREGTS (133 aa)) are cytidylyltransferase.

It in the N-terminal section; belongs to the carbohydrate kinase PfkB family. The protein in the C-terminal section; belongs to the cytidylyltransferase family. In terms of assembly, homodimer.

The catalysed reaction is D-glycero-beta-D-manno-heptose 7-phosphate + ATP = D-glycero-beta-D-manno-heptose 1,7-bisphosphate + ADP + H(+). It carries out the reaction D-glycero-beta-D-manno-heptose 1-phosphate + ATP + H(+) = ADP-D-glycero-beta-D-manno-heptose + diphosphate. The protein operates within nucleotide-sugar biosynthesis; ADP-L-glycero-beta-D-manno-heptose biosynthesis; ADP-L-glycero-beta-D-manno-heptose from D-glycero-beta-D-manno-heptose 7-phosphate: step 1/4. It participates in nucleotide-sugar biosynthesis; ADP-L-glycero-beta-D-manno-heptose biosynthesis; ADP-L-glycero-beta-D-manno-heptose from D-glycero-beta-D-manno-heptose 7-phosphate: step 3/4. In terms of biological role, catalyzes the phosphorylation of D-glycero-D-manno-heptose 7-phosphate at the C-1 position to selectively form D-glycero-beta-D-manno-heptose-1,7-bisphosphate. Catalyzes the ADP transfer from ATP to D-glycero-beta-D-manno-heptose 1-phosphate, yielding ADP-D-glycero-beta-D-manno-heptose. The protein is Bifunctional protein HldE of Rhodopseudomonas palustris (strain HaA2).